We begin with the raw amino-acid sequence, 685 residues long: Mesothelin-like protein (685 aa).

The first 32 residues, 1–32 (MSRTLRPSAMGSRVGALASPGLALLLSLTAHC), serve as a signal peptide directing secretion. Residues 33 to 627 (SGPQAKGLPK…GVSHTSGSPP (595 aa)) are Extracellular-facing. 2 N-linked (GlcNAc...) asparagine glycosylation sites follow: Asn315 and Asn400. Residues 603 to 624 (PPSSLIHSLDPPGNDGVSHTSG) form a disordered region. Residues 628-648 (VHLGYLSLAVALPSSLLWLLL) traverse the membrane as a helical segment. Over 649–685 (CQLPSGQMATAHRTLGPMALAQGSWTPEHQIPEKRSC) the chain is Cytoplasmic.

It belongs to the mesothelin family.

The protein localises to the membrane. Functionally, may play a role in cellular adhesion. The chain is Mesothelin-like protein (Mslnl) from Mus musculus (Mouse).